A 287-amino-acid polypeptide reads, in one-letter code: Cyclopropane mycolic acid synthase 1 (287 aa).

S-adenosyl-L-methionine is bound by residues 33–34 (YS), 68–76 (LLDVGCGWG), 94–99 (TLSKNQ), and 123–124 (WE). The active site involves Cys269.

This sequence belongs to the CFA/CMAS family. As to quaternary structure, homodimer.

Its subcellular location is the cytoplasm. The enzyme catalyses a 1-acyl-2-(9Z)-enoyl-sn-glycero-3-phospholipid + S-adenosyl-L-methionine = a 1-acyl-2-(9-cyclopronane)-acyl-sn-glycero-3-phospholipid + S-adenosyl-L-homocysteine + H(+). It participates in lipid metabolism; mycolic acid biosynthesis. Catalyzes the conversion of a double bond to a cyclopropane ring at the distal position of an alpha mycolic acid via the transfer of a methylene group from S-adenosyl-L-methionine. Cyclopropanated mycolic acids are key factors participating in cell envelope permeability, host immunomodulation and persistence. This is Cyclopropane mycolic acid synthase 1 (cmaA1) from Mycobacterium tuberculosis (strain CDC 1551 / Oshkosh).